A 127-amino-acid chain; its full sequence is Secreted RxLR effector protein 3 (127 aa).

Positions 1–20 are cleaved as a signal peptide; the sequence is MRPPLLLFLTVTVLVSCASA. Positions 30–48 match the RxLR-dEER motif; it reads RSLRSIKTTTNDDAAEEER.

It belongs to the RxLR effector family.

Its subcellular location is the secreted. It is found in the host cell. Its function is as follows. Secreted effector that partially suppresses elicitor-induced cell death in host and enhances virulence of P.parasitica. This chain is Secreted RxLR effector protein 3, found in Phytophthora nicotianae (Potato buckeye rot agent).